We begin with the raw amino-acid sequence, 120 residues long: NAD(P)H-quinone oxidoreductase subunit 3, chloroplastic (120 aa).

3 consecutive transmembrane segments (helical) span residues 9–29, 64–84, and 88–108; these read IFWA…LISG, MFAL…PWAM, and VLGV…IIGS.

Belongs to the complex I subunit 3 family. NDH is composed of at least 16 different subunits, 5 of which are encoded in the nucleus.

It is found in the plastid. The protein resides in the chloroplast thylakoid membrane. The enzyme catalyses a plastoquinone + NADH + (n+1) H(+)(in) = a plastoquinol + NAD(+) + n H(+)(out). It catalyses the reaction a plastoquinone + NADPH + (n+1) H(+)(in) = a plastoquinol + NADP(+) + n H(+)(out). Functionally, NDH shuttles electrons from NAD(P)H:plastoquinone, via FMN and iron-sulfur (Fe-S) centers, to quinones in the photosynthetic chain and possibly in a chloroplast respiratory chain. The immediate electron acceptor for the enzyme in this species is believed to be plastoquinone. Couples the redox reaction to proton translocation, and thus conserves the redox energy in a proton gradient. The protein is NAD(P)H-quinone oxidoreductase subunit 3, chloroplastic of Drimys granadensis.